The primary structure comprises 122 residues: Large ribosomal subunit protein uL14 (122 aa).

This sequence belongs to the universal ribosomal protein uL14 family. In terms of assembly, part of the 50S ribosomal subunit. Forms a cluster with proteins L3 and L19. In the 70S ribosome, L14 and L19 interact and together make contacts with the 16S rRNA in bridges B5 and B8.

Its function is as follows. Binds to 23S rRNA. Forms part of two intersubunit bridges in the 70S ribosome. The sequence is that of Large ribosomal subunit protein uL14 from Geotalea daltonii (strain DSM 22248 / JCM 15807 / FRC-32) (Geobacter daltonii).